Here is a 210-residue protein sequence, read N- to C-terminus: FMN-dependent NADH:quinone oxidoreductase (210 aa).

FMN is bound by residues 17–19, 102–105, and 148–151; these read SRS, MWNL, and SCGG.

Belongs to the azoreductase type 1 family. In terms of assembly, homodimer. It depends on FMN as a cofactor.

It carries out the reaction 2 a quinone + NADH + H(+) = 2 a 1,4-benzosemiquinone + NAD(+). The catalysed reaction is N,N-dimethyl-1,4-phenylenediamine + anthranilate + 2 NAD(+) = 2-(4-dimethylaminophenyl)diazenylbenzoate + 2 NADH + 2 H(+). Its function is as follows. Quinone reductase that provides resistance to thiol-specific stress caused by electrophilic quinones. Also exhibits azoreductase activity. Catalyzes the reductive cleavage of the azo bond in aromatic azo compounds to the corresponding amines. This chain is FMN-dependent NADH:quinone oxidoreductase, found in Trichlorobacter lovleyi (strain ATCC BAA-1151 / DSM 17278 / SZ) (Geobacter lovleyi).